The following is a 35-amino-acid chain: KWKIFKKIEKVGRNIRNGIIKAGPAVAVLGEAKAL.

Leucine 35 carries the post-translational modification Leucine amide.

It belongs to the cecropin family.

The protein resides in the secreted. Functionally, cecropins have lytic and antibacterial activity against several Gram-positive and Gram-negative bacteria. In Antheraea pernyi (Chinese oak silk moth), this protein is Cecropin-B.